The primary structure comprises 155 residues: Large ribosomal subunit protein uL22c (155 aa).

This sequence belongs to the universal ribosomal protein uL22 family. In terms of assembly, part of the 50S ribosomal subunit.

The protein localises to the plastid. It is found in the chloroplast. Functionally, this protein binds specifically to 23S rRNA. In terms of biological role, the globular domain of the protein is located near the polypeptide exit tunnel on the outside of the subunit, while an extended beta-hairpin is found that lines the wall of the exit tunnel in the center of the 70S ribosome. In Nicotiana sylvestris (Wood tobacco), this protein is Large ribosomal subunit protein uL22c (rpl22).